Here is a 129-residue protein sequence, read N- to C-terminus: Small ribosomal subunit protein uS11 (129 aa).

It belongs to the universal ribosomal protein uS11 family. In terms of assembly, part of the 30S ribosomal subunit. Interacts with proteins S7 and S18. Binds to IF-3.

In terms of biological role, located on the platform of the 30S subunit, it bridges several disparate RNA helices of the 16S rRNA. Forms part of the Shine-Dalgarno cleft in the 70S ribosome. This Parabacteroides distasonis (strain ATCC 8503 / DSM 20701 / CIP 104284 / JCM 5825 / NCTC 11152) protein is Small ribosomal subunit protein uS11.